We begin with the raw amino-acid sequence, 660 residues long: Bifunctional polymyxin resistance protein ArnA (660 aa).

Residues 1–304 form a formyltransferase ArnAFT region; it reads MKAVIFAYHD…TLGLVAGARL (304 aa). The active-site Proton donor; for formyltransferase activity is the histidine 104. Residues arginine 114 and 136-140 contribute to the (6R)-10-formyltetrahydrofolate site; that span reads VKRAD. Residues 314–660 are dehydrogenase ArnADH; that stretch reads RRIRVLILGV…RSVDVAERAS (347 aa). NAD(+) is bound by residues aspartate 347 and 368-369; that span reads DI. UDP-alpha-D-glucuronate-binding positions include alanine 393, tyrosine 398, and 432–433; that span reads TS. Glutamate 434 serves as the catalytic Proton acceptor; for decarboxylase activity. Residues arginine 460, asparagine 492, 526–535, and tyrosine 613 each bind UDP-alpha-D-glucuronate; that span reads KLIDGGQQKR. Arginine 619 (proton donor; for decarboxylase activity) is an active-site residue.

In the N-terminal section; belongs to the Fmt family. UDP-L-Ara4N formyltransferase subfamily. The protein in the C-terminal section; belongs to the NAD(P)-dependent epimerase/dehydratase family. UDP-glucuronic acid decarboxylase subfamily. As to quaternary structure, homohexamer, formed by a dimer of trimers.

It carries out the reaction UDP-alpha-D-glucuronate + NAD(+) = UDP-beta-L-threo-pentopyranos-4-ulose + CO2 + NADH. The enzyme catalyses UDP-4-amino-4-deoxy-beta-L-arabinose + (6R)-10-formyltetrahydrofolate = UDP-4-deoxy-4-formamido-beta-L-arabinose + (6S)-5,6,7,8-tetrahydrofolate + H(+). Its pathway is nucleotide-sugar biosynthesis; UDP-4-deoxy-4-formamido-beta-L-arabinose biosynthesis; UDP-4-deoxy-4-formamido-beta-L-arabinose from UDP-alpha-D-glucuronate: step 1/3. The protein operates within nucleotide-sugar biosynthesis; UDP-4-deoxy-4-formamido-beta-L-arabinose biosynthesis; UDP-4-deoxy-4-formamido-beta-L-arabinose from UDP-alpha-D-glucuronate: step 3/3. It functions in the pathway bacterial outer membrane biogenesis; lipopolysaccharide biosynthesis. In terms of biological role, bifunctional enzyme that catalyzes the oxidative decarboxylation of UDP-glucuronic acid (UDP-GlcUA) to UDP-4-keto-arabinose (UDP-Ara4O) and the addition of a formyl group to UDP-4-amino-4-deoxy-L-arabinose (UDP-L-Ara4N) to form UDP-L-4-formamido-arabinose (UDP-L-Ara4FN). The modified arabinose is attached to lipid A and is required for resistance to polymyxin and cationic antimicrobial peptides. The protein is Bifunctional polymyxin resistance protein ArnA of Salmonella paratyphi B (strain ATCC BAA-1250 / SPB7).